The primary structure comprises 93 residues: Acylphosphatase (93 aa).

Residues 7 to 93 (CLKAVISGKV…GEFRAFEILR (87 aa)) form the Acylphosphatase-like domain. Residues R22 and N40 contribute to the active site.

Belongs to the acylphosphatase family.

The enzyme catalyses an acyl phosphate + H2O = a carboxylate + phosphate + H(+). This is Acylphosphatase (acyP) from Acaryochloris marina (strain MBIC 11017).